The primary structure comprises 177 residues: MAESLEQQLRALVRDVPDFPKPGILFRDLTPVMRDPQAWKQVMEGMQQSLAGLQPEVIVGIEARGFIVGTSLAMTMGLGFVPVRKPGKLPGPITAVDYALEYGSDRLEIQEGALSGCQRVLVVDDLLATGGTAAACAELVSRAGGAVCGYGFVAELTALGGRSKLPGGVLVESLIHY.

Belongs to the purine/pyrimidine phosphoribosyltransferase family. Homodimer.

The protein resides in the cytoplasm. It carries out the reaction AMP + diphosphate = 5-phospho-alpha-D-ribose 1-diphosphate + adenine. It functions in the pathway purine metabolism; AMP biosynthesis via salvage pathway; AMP from adenine: step 1/1. Its function is as follows. Catalyzes a salvage reaction resulting in the formation of AMP, that is energically less costly than de novo synthesis. The protein is Adenine phosphoribosyltransferase of Synechococcus sp. (strain RCC307).